Consider the following 79-residue polypeptide: Small ribosomal subunit protein bS18 (79 aa).

This sequence belongs to the bacterial ribosomal protein bS18 family. Part of the 30S ribosomal subunit. Forms a tight heterodimer with protein bS6.

In terms of biological role, binds as a heterodimer with protein bS6 to the central domain of the 16S rRNA, where it helps stabilize the platform of the 30S subunit. The polypeptide is Small ribosomal subunit protein bS18 (Micrococcus luteus (strain ATCC 4698 / DSM 20030 / JCM 1464 / CCM 169 / CCUG 5858 / IAM 1056 / NBRC 3333 / NCIMB 9278 / NCTC 2665 / VKM Ac-2230) (Micrococcus lysodeikticus)).